A 217-amino-acid polypeptide reads, in one-letter code: Ribosomal RNA large subunit methyltransferase E (217 aa).

S-adenosyl-L-methionine is bound by residues Gly64, Trp66, Asp92, Asp108, and Asp133. Lys173 (proton acceptor) is an active-site residue.

It belongs to the class I-like SAM-binding methyltransferase superfamily. RNA methyltransferase RlmE family.

The protein localises to the cytoplasm. It carries out the reaction uridine(2552) in 23S rRNA + S-adenosyl-L-methionine = 2'-O-methyluridine(2552) in 23S rRNA + S-adenosyl-L-homocysteine + H(+). Its function is as follows. Specifically methylates the uridine in position 2552 of 23S rRNA at the 2'-O position of the ribose in the fully assembled 50S ribosomal subunit. The protein is Ribosomal RNA large subunit methyltransferase E of Delftia acidovorans (strain DSM 14801 / SPH-1).